We begin with the raw amino-acid sequence, 215 residues long: uncharacterized protein (215 aa).

Active-site charge relay system residues include Ser-114, Asp-162, and His-194.

The protein belongs to the AB hydrolase superfamily. AB hydrolase 2 family.

This is an uncharacterized protein from Rickettsia typhi (strain ATCC VR-144 / Wilmington).